We begin with the raw amino-acid sequence, 975 residues long: C-1-tetrahydrofolate synthase, mitochondrial (975 aa).

A mitochondrion-targeting transit peptide spans 1–34 (MLSRLSLLSNSRAFQQARWRIYRLKVSPTVHASQ). The methylenetetrahydrofolate dehydrogenase and cyclohydrolase stretch occupies residues 35–343 (YHILSGRKLA…KPLPLHLESP (309 aa)). Substrate-binding positions include 83–87 (YVRMK) and 130–132 (IQL). NADP(+) contacts are provided by residues 201 to 203 (GRS) and S226. Substrate is bound at residue 301–305 (PGGVG). Residues 344-975 (VPSDIDISRA…DDDGEIEGLF (632 aa)) form a formyltetrahydrofolate synthetase region. 408-415 (TPLGEGKS) contributes to the ATP binding site.

In the N-terminal section; belongs to the tetrahydrofolate dehydrogenase/cyclohydrolase family. It in the C-terminal section; belongs to the formate--tetrahydrofolate ligase family. In terms of assembly, homodimer.

Its subcellular location is the mitochondrion. The enzyme catalyses (6R)-5,10-methylene-5,6,7,8-tetrahydrofolate + NADP(+) = (6R)-5,10-methenyltetrahydrofolate + NADPH. The catalysed reaction is (6R)-5,10-methenyltetrahydrofolate + H2O = (6R)-10-formyltetrahydrofolate + H(+). It carries out the reaction (6S)-5,6,7,8-tetrahydrofolate + formate + ATP = (6R)-10-formyltetrahydrofolate + ADP + phosphate. The protein operates within one-carbon metabolism; tetrahydrofolate interconversion. Mitochondrial isozyme of C-1-tetrahydrofolate synthase. The trifunctional enzyme catalyzes the interconversion of the one-carbon derivatives of tetrahydrofolate (THF) between different oxidation states by the enzymatic activities 10-formyltetrahydrofolate synthetase, 5,lO-methenyltetrahydrofolate cyclohydrolase, and 5,lO-methylenetetrahydrofolate dehydrogenase. This Saccharomyces cerevisiae (strain ATCC 204508 / S288c) (Baker's yeast) protein is C-1-tetrahydrofolate synthase, mitochondrial.